The chain runs to 287 residues: Large ribosomal subunit protein uL2 (287 aa).

The disordered stretch occupies residues 221–287; it reads RGSVMNPCDH…SKRSRGGRDS (67 aa). Positions 258–287 are enriched in basic residues; sequence KTRKRNKPSNKFVLRKRRKTSKRSRGGRDS.

This sequence belongs to the universal ribosomal protein uL2 family. Part of the 50S ribosomal subunit. Forms a bridge to the 30S subunit in the 70S ribosome.

Its function is as follows. One of the primary rRNA binding proteins. Required for association of the 30S and 50S subunits to form the 70S ribosome, for tRNA binding and peptide bond formation. It has been suggested to have peptidyltransferase activity; this is somewhat controversial. Makes several contacts with the 16S rRNA in the 70S ribosome. The sequence is that of Large ribosomal subunit protein uL2 from Synechococcus sp. (strain WH7803).